Here is a 172-residue protein sequence, read N- to C-terminus: Adenine phosphoribosyltransferase (172 aa).

Belongs to the purine/pyrimidine phosphoribosyltransferase family. In terms of assembly, homodimer.

The protein resides in the cytoplasm. It carries out the reaction AMP + diphosphate = 5-phospho-alpha-D-ribose 1-diphosphate + adenine. It participates in purine metabolism; AMP biosynthesis via salvage pathway; AMP from adenine: step 1/1. Catalyzes a salvage reaction resulting in the formation of AMP, that is energically less costly than de novo synthesis. This is Adenine phosphoribosyltransferase from Staphylococcus saprophyticus subsp. saprophyticus (strain ATCC 15305 / DSM 20229 / NCIMB 8711 / NCTC 7292 / S-41).